The primary structure comprises 105 residues: Small ribosomal subunit protein uS10 (105 aa).

Belongs to the universal ribosomal protein uS10 family. Part of the 30S ribosomal subunit.

Its function is as follows. Involved in the binding of tRNA to the ribosomes. This chain is Small ribosomal subunit protein uS10, found in Rickettsia canadensis (strain McKiel).